Reading from the N-terminus, the 529-residue chain is CTP synthase (529 aa).

An amidoligase domain region spans residues 1 to 270 (MKYIVVTGGV…ADVVCSYLSL (270 aa)). S12 serves as a coordination point for CTP. A UTP-binding site is contributed by S12. ATP-binding positions include 13–18 (GLGKGI) and D70. Mg(2+) contacts are provided by D70 and E145. Residues 152-154 (DIE), 191-196 (KTKPTQ), and K227 each bind CTP. Residues 191-196 (KTKPTQ) and K227 contribute to the UTP site. 243–245 (KDA) is an ATP binding site. In terms of domain architecture, Glutamine amidotransferase type-1 spans 293–525 (VAIVSKYGIE…VEACKKNKSS (233 aa)). An L-glutamine-binding site is contributed by G349. C376 (nucleophile; for glutamine hydrolysis) is an active-site residue. Residues 377-380 (LGFQ), E400, and R455 contribute to the L-glutamine site. Active-site residues include H498 and E500.

It belongs to the CTP synthase family. Homotetramer.

It catalyses the reaction UTP + L-glutamine + ATP + H2O = CTP + L-glutamate + ADP + phosphate + 2 H(+). The catalysed reaction is L-glutamine + H2O = L-glutamate + NH4(+). The enzyme catalyses UTP + NH4(+) + ATP = CTP + ADP + phosphate + 2 H(+). The protein operates within pyrimidine metabolism; CTP biosynthesis via de novo pathway; CTP from UDP: step 2/2. Allosterically activated by GTP, when glutamine is the substrate; GTP has no effect on the reaction when ammonia is the substrate. The allosteric effector GTP functions by stabilizing the protein conformation that binds the tetrahedral intermediate(s) formed during glutamine hydrolysis. Inhibited by the product CTP, via allosteric rather than competitive inhibition. Its function is as follows. Catalyzes the ATP-dependent amination of UTP to CTP with either L-glutamine or ammonia as the source of nitrogen. Regulates intracellular CTP levels through interactions with the four ribonucleotide triphosphates. The polypeptide is CTP synthase (Methanoculleus marisnigri (strain ATCC 35101 / DSM 1498 / JR1)).